A 108-amino-acid chain; its full sequence is MPNFHLINICVFYRYYNFFLICHDISFPFRTILGGRKIAITIVRNNNTGFFFFWAYIRYFTPIWKEITESLPHYKSCFVAILPERAVNSFVYIIRTLSNMLNQFILNL.

This is an uncharacterized protein from Saccharomyces cerevisiae (strain ATCC 204508 / S288c) (Baker's yeast).